The primary structure comprises 114 residues: Fumarate reductase subunit D (114 aa).

3 helical membrane-spanning segments follow: residues 27 to 47 (ICFPVLLLILGVLLPLGLVPV), 50 to 70 (IVAFAHTWFGKLVILAVTIFP), and 94 to 114 (WVFYGLSALYSVIVFFAVIAL).

Belongs to the FrdD family. In terms of assembly, part of an enzyme complex containing four subunits: a flavoprotein (FrdA), an iron-sulfur protein (FrdB), and two hydrophobic anchor proteins (FrdC and FrdD).

The protein localises to the cell inner membrane. Its function is as follows. Anchors the catalytic components of the fumarate reductase complex to the cell membrane, binds quinones. This chain is Fumarate reductase subunit D, found in Actinobacillus pleuropneumoniae serotype 3 (strain JL03).